The sequence spans 147 residues: Small ribosomal subunit protein uS12 (147 aa).

It belongs to the universal ribosomal protein uS12 family. In terms of assembly, part of the 30S ribosomal subunit.

In terms of biological role, with S4 and S5 plays an important role in translational accuracy. Located at the interface of the 30S and 50S subunits. The sequence is that of Small ribosomal subunit protein uS12 from Staphylothermus marinus (strain ATCC 43588 / DSM 3639 / JCM 9404 / F1).